We begin with the raw amino-acid sequence, 143 residues long: S-protein homolog 11 (143 aa).

The signal sequence occupies residues 1–20 (MNCFSFSFIIIVLCAGSSNA).

The protein belongs to the plant self-incompatibility (S1) protein family.

The protein localises to the secreted. This Arabidopsis thaliana (Mouse-ear cress) protein is S-protein homolog 11.